The chain runs to 99 residues: UPF0751 protein BCAH820_B0138 (99 aa).

This sequence belongs to the UPF0751 family.

The protein is UPF0751 protein BCAH820_B0138 of Bacillus cereus (strain AH820).